A 103-amino-acid chain; its full sequence is Co-chaperonin GroES (103 aa).

Belongs to the GroES chaperonin family. Heptamer of 7 subunits arranged in a ring. Interacts with the chaperonin GroEL.

It is found in the cytoplasm. Its function is as follows. Together with the chaperonin GroEL, plays an essential role in assisting protein folding. The GroEL-GroES system forms a nano-cage that allows encapsulation of the non-native substrate proteins and provides a physical environment optimized to promote and accelerate protein folding. GroES binds to the apical surface of the GroEL ring, thereby capping the opening of the GroEL channel. The chain is Co-chaperonin GroES from Prochlorococcus marinus subsp. pastoris (strain CCMP1986 / NIES-2087 / MED4).